The sequence spans 382 residues: MGSQTMAVALPRDLRQDANLAKRRHAELCRQKRVFNARNRIIGGDTEAWDVQVHDQKIKEATEKARHETFAAEMRQNDKIMCILENRKKRDRKNLCRAINDFQQSFQKPETRREFDLSDPLALKKDLPARQSDNDVRNTISGMQKFMGEDLNFHERKKFQEEQNREWSLQQQREWKNARAEQKCAEALYTETRLQFDETAKHLQKLESTTRKAVCASVKDFNKSQAIESVERKKQEKKQEQEDNLAEITNLLRGDLLSENPQQAASSFGPHRVVPDRWKGMTQEQLEQIRLVQKQQIQEKLRLQEEKRQRDLDWDRRRIQGARATLLFERQQWRRQRDLRRALDSSNLSLAKEQHLQKKYMNEVYTNQPTGDYFTQFNTGSR.

Positions 222–255 (NKSQAIESVERKKQEKKQEQEDNLAEITNLLRGD) form a coiled coil.

Belongs to the RIB43A family. As to quaternary structure, microtubule inner protein component of sperm flagellar doublet microtubules. In terms of tissue distribution, expressed in airway epithelial cells.

Its subcellular location is the cytoplasm. The protein resides in the cytoskeleton. It is found in the cilium axoneme. It localises to the flagellum axoneme. In terms of biological role, microtubule inner protein (MIP) part of the dynein-decorated doublet microtubules (DMTs) in cilia axoneme, which is required for motile cilia beating. In Homo sapiens (Human), this protein is RIB43A-like with coiled-coils protein 2.